Reading from the N-terminus, the 527-residue chain is Amidophosphoribosyltransferase (527 aa).

The tract at residues 1–30 is disordered; the sequence is MAVDSDYVTDRAAGSRQTVTGQQPEQDLNS. Positions 1–34 are excised as a propeptide; that stretch reads MAVDSDYVTDRAAGSRQTVTGQQPEQDLNSPREE. Polar residues predominate over residues 15–29; sequence SRQTVTGQQPEQDLN. Cys-35 acts as the Nucleophile in catalysis. The Glutamine amidotransferase type-2 domain occupies 35 to 261; the sequence is CGVFGVWAPG…PGELLAIDAD (227 aa). Residue Cys-276 participates in [4Fe-4S] cluster binding. Mg(2+)-binding residues include Ser-323, Asp-385, and Asp-386. Positions 422, 478, and 481 each coordinate [4Fe-4S] cluster.

The protein in the C-terminal section; belongs to the purine/pyrimidine phosphoribosyltransferase family. Mg(2+) serves as cofactor. [4Fe-4S] cluster is required as a cofactor.

It carries out the reaction 5-phospho-beta-D-ribosylamine + L-glutamate + diphosphate = 5-phospho-alpha-D-ribose 1-diphosphate + L-glutamine + H2O. It functions in the pathway purine metabolism; IMP biosynthesis via de novo pathway; N(1)-(5-phospho-D-ribosyl)glycinamide from 5-phospho-alpha-D-ribose 1-diphosphate: step 1/2. Functionally, catalyzes the formation of phosphoribosylamine from phosphoribosylpyrophosphate (PRPP) and glutamine. This is Amidophosphoribosyltransferase from Mycobacterium bovis (strain ATCC BAA-935 / AF2122/97).